Here is a 227-residue protein sequence, read N- to C-terminus: Large ribosomal subunit protein bL25 (227 aa).

A disordered region spans residues 199 to 227 (AIAEAQSAEAAEEKAEESAEDEKKDGEEA). Residues 209–227 (AEEKAEESAEDEKKDGEEA) show a composition bias toward basic and acidic residues.

The protein belongs to the bacterial ribosomal protein bL25 family. CTC subfamily. Part of the 50S ribosomal subunit; part of the 5S rRNA/L5/L18/L25 subcomplex. Contacts the 5S rRNA. Binds to the 5S rRNA independently of L5 and L18.

In terms of biological role, this is one of the proteins that binds to the 5S RNA in the ribosome where it forms part of the central protuberance. The sequence is that of Large ribosomal subunit protein bL25 from Methylobacterium radiotolerans (strain ATCC 27329 / DSM 1819 / JCM 2831 / NBRC 15690 / NCIMB 10815 / 0-1).